A 227-amino-acid chain; its full sequence is MAYPLQLGFQDASSPIMEELLHFHDHTLMIVFLISSLVLYIISLMLTTKLTHTSTMDAQEVETIWTILPAIILILIALPSLRILYMMDEINNPSLTVKTMGHQWYWSYEYTDYEELTFDSYMIPTLDLKPGDVRLLEVDNRVVLPMEIPVRMLISSEDVLHSWAVPSLGLKTDAIPGRLNQATLISTRPGLFYGQCSEICGSNHSFMPIVLELVPLKHFENWTTTML.

The Mitochondrial intermembrane portion of the chain corresponds to 1–14 (MAYPLQLGFQDASS). The helical transmembrane segment at 15-45 (PIMEELLHFHDHTLMIVFLISSLVLYIISLM) threads the bilayer. The Mitochondrial matrix segment spans residues 46–59 (LTTKLTHTSTMDAQ). A helical membrane pass occupies residues 60–87 (EVETIWTILPAIILILIALPSLRILYMM). Topologically, residues 88–227 (DEINNPSLTV…HFENWTTTML (140 aa)) are mitochondrial intermembrane. Cu cation-binding residues include His-161, Cys-196, Glu-198, Cys-200, His-204, and Met-207. Glu-198 is a Mg(2+) binding site.

It belongs to the cytochrome c oxidase subunit 2 family. In terms of assembly, component of the cytochrome c oxidase (complex IV, CIV), a multisubunit enzyme composed of 14 subunits. The complex is composed of a catalytic core of 3 subunits MT-CO1, MT-CO2 and MT-CO3, encoded in the mitochondrial DNA, and 11 supernumerary subunits COX4I, COX5A, COX5B, COX6A, COX6B, COX6C, COX7A, COX7B, COX7C, COX8 and NDUFA4, which are encoded in the nuclear genome. The complex exists as a monomer or a dimer and forms supercomplexes (SCs) in the inner mitochondrial membrane with NADH-ubiquinone oxidoreductase (complex I, CI) and ubiquinol-cytochrome c oxidoreductase (cytochrome b-c1 complex, complex III, CIII), resulting in different assemblies (supercomplex SCI(1)III(2)IV(1) and megacomplex MCI(2)III(2)IV(2)). Found in a complex with TMEM177, COA6, COX18, COX20, SCO1 and SCO2. Interacts with TMEM177 in a COX20-dependent manner. Interacts with COX20. Interacts with COX16. Cu cation serves as cofactor.

Its subcellular location is the mitochondrion inner membrane. It carries out the reaction 4 Fe(II)-[cytochrome c] + O2 + 8 H(+)(in) = 4 Fe(III)-[cytochrome c] + 2 H2O + 4 H(+)(out). Its function is as follows. Component of the cytochrome c oxidase, the last enzyme in the mitochondrial electron transport chain which drives oxidative phosphorylation. The respiratory chain contains 3 multisubunit complexes succinate dehydrogenase (complex II, CII), ubiquinol-cytochrome c oxidoreductase (cytochrome b-c1 complex, complex III, CIII) and cytochrome c oxidase (complex IV, CIV), that cooperate to transfer electrons derived from NADH and succinate to molecular oxygen, creating an electrochemical gradient over the inner membrane that drives transmembrane transport and the ATP synthase. Cytochrome c oxidase is the component of the respiratory chain that catalyzes the reduction of oxygen to water. Electrons originating from reduced cytochrome c in the intermembrane space (IMS) are transferred via the dinuclear copper A center (CU(A)) of subunit 2 and heme A of subunit 1 to the active site in subunit 1, a binuclear center (BNC) formed by heme A3 and copper B (CU(B)). The BNC reduces molecular oxygen to 2 water molecules using 4 electrons from cytochrome c in the IMS and 4 protons from the mitochondrial matrix. This chain is Cytochrome c oxidase subunit 2 (MT-CO2), found in Tupaia glis (Common tree shrew).